The chain runs to 1877 residues: Phosphatidylinositol 4-kinase stt4 (1877 aa).

The 187-residue stretch at 1305–1491 (PDSDAASSPI…KPILDRVMDK (187 aa)) folds into the PIK helical domain. Positions 1492 to 1625 (MINSLSGEDK…EVWQSAIFKV (134 aa)) are pleckstrin homology (PH) domain conferring phosphoinositide binding specificity. Positions 1593-1861 (DPEELAVNGT…LIEQSYANKR (269 aa)) constitute a PI3K/PI4K catalytic domain. Positions 1599 to 1605 (VNGTEEE) are G-loop. Residues 1728-1736 (QFKDRHNGN) form a catalytic loop region. The segment at 1747-1771 (HIDFGFIFDIAPGGITFESAPFKLT) is activation loop.

The protein belongs to the PI3/PI4-kinase family. Type III PI4K subfamily.

The protein localises to the cytoplasm. The enzyme catalyses a 1,2-diacyl-sn-glycero-3-phospho-(1D-myo-inositol) + ATP = a 1,2-diacyl-sn-glycero-3-phospho-(1D-myo-inositol 4-phosphate) + ADP + H(+). Acts on phosphatidylinositol (PI) in the first committed step in the production of the second messenger inositol 1,4,5,-trisphosphate. This chain is Phosphatidylinositol 4-kinase stt4 (stt4), found in Schizosaccharomyces pombe (strain 972 / ATCC 24843) (Fission yeast).